The sequence spans 1707 residues: MANGNFKLSQLLNVDEMSAEQRSHFFDLMLTKPDCEIGQMMQRVVVDKVDDMIRERKTKDPVIVHEVLSQKEQNKLMEIYPEFNIVFKDDKNMVHGFAAAERKLQALLLLDRVPALQEVDDIGGQWSFWVTRGEKRIHSCCPNLDIRDDQREISRQIFLTAIGDQARSGKRQMSENELWMYDQFRKNIAAPNAVRCNNTYHGCTCRGFSDGKKKGAQYAIALHSLYDFKLKDLMATMVEKKTKVGHAAMLFAPESMLVDEGPLPSVDGYYMKKNGKIYFGFEKDPSFSYIHDWEEYKKYLLGKPVSYQGNVFYFEPWQVRGDTMLFSIYRIAGVPRRSLSSQEYYRRIYISRWENMVVVPIFDLVESTRELVKKDLFVEKQFMDKCLDYIARLSDQQLTISNVKSYLSSNNWVLFINGAAVKNKQSVDSRDLQLLAQTLLVKEQVARPVMRELREAILTETKPITSLTDVLGLISRKMWKQFANKIAVGGFVGMVGTLIGFYPKKVLTWAKDTPNGPELCYENSHKTKVIVFLSVVYAIGGITLMRRDIRDGLVKKLCDMFDIKRGAHVLDVENPCRYYDINDFFSSLYSASESGETVLPDLSEVKAKSDKLLQQKKEIADEFLSAKFSNYSGSSVRTSPPSVVGSSRSGLGLLLEDSNVLTQARVGVSRKVADEEIMEQFLSGLIDTEAEIDEVVPAFSAECERGETSGTKVLCNLLTPPGFENVLPAVKPLVSKGKTVKRVDYFQVMGGERLPKRPVVSGDDSVDARREFLYYLDAERVAQNDEIMSLYRDYSRGVIRTGGQNYPHGLGVWDVEMKNWCIRPVVTEHAYVSNPDKRMDDWSGYLEVAVWERGMLVNDFAVERMSDYVIVCDQTYLCNNRLILDNLSALDLGPVNCSFELVDGVPGCGKSTMIVNSANPCVDVVLSTGRAATDDLIERFASKGFPCKLKRRVKTVDSFLMHCVDGSLTGDVLHFDEALMAHAGMVYFCAQIAGAKRCICQGDQNQISFKPRVSQVDLRFSSLVGKFDIVTEKRETYRSPADVAAVLNKYYTGDVRTHNATANSMTVRKIVSKEQVSLKPGAQYITFLQSEKKELVNLLALRKVAAKVSTVHESQGETFKDVVLVRTKPTDDSIARGREYLIVALSRHTQSLVYETVKEDDVSKEIRESAALTKAALARFFVTETVLXRFRSRFDVFRHHEGPCAVPDSGTITDLEMWYDALFPGNSLRDSSLDGYLVATTDCNLRLDNVTIKSGNWKDKFAEKETFLKPVIRTAMPDKRKTTQLESLLALQKRNQAAPDLQENVHATVLIEETMKKLKSVVYDVGKIRADPIVNRAQMERWWRNQSTAVQAKVVADVRELHEIDYSSYMFMIKSDVKPKTDLTPQFEYSALQTVVYHEKLINSLFGPIFKEINERKLDAMQPHFVFNTRMTSSDLNDRVKFLNTEAAYDFVEIDMSKFDKSANRFHLQLQLEIYRLFGLDEWAAFLWEVSHTQTTVRDIQNGMMAHIWYQQKSGDADTYNANSDRTLCALLSELPLEKAVMVTYGGDDSLIAFPRGTQFVDPCPKLATKWNFECKIFKYDVPMFCGKFLLKTSSCYEFVPDPVKVLTKLGKKSIKDVQHLAEIYISLNDSNRALGNYMVVSKLSESVSDRYLYKGDSVHALCALWKHIKSFTALCTLFRDENDKELNPAKVDWKKAQRAVSNFYDW.

The segment at 65–425 (HEVLSQKEQN…INGAAVKNKQ (361 aa)) is methyltransferase. An Alphavirus-like MT domain is found at 86–300 (VFKDDKNMVH…HDWEEYKKYL (215 aa)). The stretch at 601–622 (DLSEVKAKSDKLLQQKKEIADE) forms a coiled coil. A (+)RNA virus helicase ATP-binding domain is found at 872–1033 (CDQTYLCNNR…VGKFDIVTEK (162 aa)). The tract at residues 901 to 1155 (LVDGVPGCGK…SRHTQSLVYE (255 aa)) is helicase. In terms of domain architecture, (+)RNA virus helicase C-terminal spans 1034–1187 (RETYRSPADV…ARFFVTETVL (154 aa)). A RdRp catalytic domain is found at 1449–1562 (YDFVEIDMSK…AFPRGTQFVD (114 aa)).

The protein belongs to the ssRNA positive-strand viruses RNA-directed RNA polymerase family. In terms of assembly, heterodimer of a large and a small subunit.

It carries out the reaction ATP + H2O = ADP + phosphate + H(+). The catalysed reaction is RNA(n) + a ribonucleoside 5'-triphosphate = RNA(n+1) + diphosphate. Functionally, is an RNA-dependent RNA polymerase active in viral RNA replication. In terms of biological role, is a methyltransferase active in RNA capping and an RNA helicase. Methyltransferase displays a cytoplasmic capping enzyme activity. This function is necessary since all viral RNAs are synthesized in the cytoplasm, and host capping enzymes are restricted to the nucleus. Helicase region probably exhibits NTPase and RNA unwinding activities (Potential). The protein is Replicase large subunit of Tobacco rattle virus (isolate PpK20) (TRV).